A 250-amino-acid chain; its full sequence is Phosphate import ATP-binding protein PstB (250 aa).

Positions 4-245 constitute an ABC transporter domain; sequence LTARDLKLSF…PRHELTEKYV (242 aa). 36-43 is an ATP binding site; sequence GPSGSGKS.

Belongs to the ABC transporter superfamily. Phosphate importer (TC 3.A.1.7) family. In terms of assembly, the complex is composed of two ATP-binding proteins (PstB), two transmembrane proteins (PstC and PstA) and a solute-binding protein (PstS).

The protein resides in the cell membrane. It carries out the reaction phosphate(out) + ATP + H2O = ADP + 2 phosphate(in) + H(+). Its function is as follows. Part of the ABC transporter complex PstSACB involved in phosphate import. Responsible for energy coupling to the transport system. This chain is Phosphate import ATP-binding protein PstB, found in Pyrobaculum aerophilum (strain ATCC 51768 / DSM 7523 / JCM 9630 / CIP 104966 / NBRC 100827 / IM2).